Here is a 261-residue protein sequence, read N- to C-terminus: Probable glutathione-independent glyoxalase hsp3103 (261 aa).

Catalysis depends on residues Cys-162, His-163, and Glu-196.

It belongs to the peptidase C56 family. HSP31-like subfamily.

The enzyme catalyses methylglyoxal + H2O = (R)-lactate + H(+). Its function is as follows. Catalyzes the conversion of methylglyoxal (MG) to D-lactate in a single glutathione (GSH)-independent step. May play a role in detoxifying endogenously produced glyoxals. Involved in protection against reactive oxygen species (ROS). This chain is Probable glutathione-independent glyoxalase hsp3103, found in Schizosaccharomyces pombe (strain 972 / ATCC 24843) (Fission yeast).